The following is a 202-amino-acid chain: Peptide deformylase (202 aa).

The tract at residues 1-24 is disordered; that stretch reads MAGSFAQLAKNAEKKKPSISVSKE. Positions 121 and 163 each coordinate Fe cation. Glu-164 is an active-site residue. His-167 contacts Fe cation.

The protein belongs to the polypeptide deformylase family. It depends on Fe(2+) as a cofactor.

It carries out the reaction N-terminal N-formyl-L-methionyl-[peptide] + H2O = N-terminal L-methionyl-[peptide] + formate. Functionally, removes the formyl group from the N-terminal Met of newly synthesized proteins. Requires at least a dipeptide for an efficient rate of reaction. N-terminal L-methionine is a prerequisite for activity but the enzyme has broad specificity at other positions. This is Peptide deformylase from Prochlorococcus marinus (strain NATL1A).